The following is a 395-amino-acid chain: Major outer membrane porin, serovar F (395 aa).

The first 22 residues, 1–22 (MKKLLKSVLVFAALSSASSLQA), serve as a signal peptide directing secretion.

The protein belongs to the chlamydial porin (CP) (TC 1.B.2) family. As to quaternary structure, part of a disulfide cross-linked outer membrane complex (COMC) composed of the major outer membrane porin (MOMP), the small cysteine-rich protein (OmcA) and the large cysteine-rich periplasmic protein (OmcB).

The protein resides in the cell outer membrane. In elementary bodies (EBs, the infectious stage, which is able to survive outside the host cell) provides the structural integrity of the outer envelope through disulfide cross-links with the small cysteine-rich protein and the large cysteine-rich periplasmic protein. It has been described in publications as the Sarkosyl-insoluble COMC (Chlamydia outer membrane complex), and serves as the functional equivalent of peptidoglycan. Its function is as follows. Permits diffusion of specific solutes through the outer membrane. The chain is Major outer membrane porin, serovar F (ompA) from Chlamydia trachomatis.